A 390-amino-acid polypeptide reads, in one-letter code: Chorismate synthase 1 (390 aa).

NADP(+)-binding residues include Arg-39 and Arg-45. Residues 95–117 (EQEEKEMKRKVTKPRPGHADLNG) are disordered. FMN-binding positions include 132–134 (RSS), 253–254 (NA), Gly-298, 313–317 (KPIPT), and Arg-339.

This sequence belongs to the chorismate synthase family. In terms of assembly, homotetramer. FMNH2 is required as a cofactor.

It carries out the reaction 5-O-(1-carboxyvinyl)-3-phosphoshikimate = chorismate + phosphate. It functions in the pathway metabolic intermediate biosynthesis; chorismate biosynthesis; chorismate from D-erythrose 4-phosphate and phosphoenolpyruvate: step 7/7. Catalyzes the anti-1,4-elimination of the C-3 phosphate and the C-6 proR hydrogen from 5-enolpyruvylshikimate-3-phosphate (EPSP) to yield chorismate, which is the branch point compound that serves as the starting substrate for the three terminal pathways of aromatic amino acid biosynthesis. This reaction introduces a second double bond into the aromatic ring system. In Bacillus cereus (strain ATCC 14579 / DSM 31 / CCUG 7414 / JCM 2152 / NBRC 15305 / NCIMB 9373 / NCTC 2599 / NRRL B-3711), this protein is Chorismate synthase 1.